The following is a 389-amino-acid chain: Succinate--CoA ligase [ADP-forming] subunit beta (389 aa).

The region spanning 9–244 (KQLFADYGLP…ETQEDPREVE (236 aa)) is the ATP-grasp domain. ATP-binding positions include lysine 46, 53-55 (GRG), glutamate 99, glycine 102, and glutamate 107. Mg(2+) contacts are provided by asparagine 199 and aspartate 213. Substrate is bound by residues asparagine 264 and 321–323 (GIV).

This sequence belongs to the succinate/malate CoA ligase beta subunit family. As to quaternary structure, heterotetramer of two alpha and two beta subunits. Mg(2+) serves as cofactor.

The enzyme catalyses succinate + ATP + CoA = succinyl-CoA + ADP + phosphate. It catalyses the reaction GTP + succinate + CoA = succinyl-CoA + GDP + phosphate. It participates in carbohydrate metabolism; tricarboxylic acid cycle; succinate from succinyl-CoA (ligase route): step 1/1. Succinyl-CoA synthetase functions in the citric acid cycle (TCA), coupling the hydrolysis of succinyl-CoA to the synthesis of either ATP or GTP and thus represents the only step of substrate-level phosphorylation in the TCA. The beta subunit provides nucleotide specificity of the enzyme and binds the substrate succinate, while the binding sites for coenzyme A and phosphate are found in the alpha subunit. This chain is Succinate--CoA ligase [ADP-forming] subunit beta, found in Tolumonas auensis (strain DSM 9187 / NBRC 110442 / TA 4).